Here is a 220-residue protein sequence, read N- to C-terminus: Pyrrolidone-carboxylate peptidase (220 aa).

Active-site residues include E80, C143, and H167.

The protein belongs to the peptidase C15 family. Homotetramer.

The protein localises to the cytoplasm. It carries out the reaction Release of an N-terminal pyroglutamyl group from a polypeptide, the second amino acid generally not being Pro.. Removes 5-oxoproline from various penultimate amino acid residues except L-proline. The polypeptide is Pyrrolidone-carboxylate peptidase (pcp) (Thermococcus litoralis (strain ATCC 51850 / DSM 5473 / JCM 8560 / NS-C)).